The sequence spans 79 residues: Small ribosomal subunit protein uS17 (79 aa).

Belongs to the universal ribosomal protein uS17 family. As to quaternary structure, part of the 30S ribosomal subunit.

One of the primary rRNA binding proteins, it binds specifically to the 5'-end of 16S ribosomal RNA. This chain is Small ribosomal subunit protein uS17, found in Orientia tsutsugamushi (strain Boryong) (Rickettsia tsutsugamushi).